The sequence spans 268 residues: Tryptophan synthase alpha chain (268 aa).

Catalysis depends on proton acceptor residues glutamate 49 and aspartate 60.

Belongs to the TrpA family. As to quaternary structure, tetramer of two alpha and two beta chains.

The enzyme catalyses (1S,2R)-1-C-(indol-3-yl)glycerol 3-phosphate + L-serine = D-glyceraldehyde 3-phosphate + L-tryptophan + H2O. It participates in amino-acid biosynthesis; L-tryptophan biosynthesis; L-tryptophan from chorismate: step 5/5. In terms of biological role, the alpha subunit is responsible for the aldol cleavage of indoleglycerol phosphate to indole and glyceraldehyde 3-phosphate. The chain is Tryptophan synthase alpha chain from Edwardsiella ictaluri (strain 93-146).